Reading from the N-terminus, the 608-residue chain is V-type ATP synthase subunit I (608 aa).

The next 9 membrane-spanning stretches (helical) occupy residues 308-325 (ISFI…MIIG), 327-346 (AAYG…SFLL), 356-376 (GLIF…GTWF), 405-425 (IIFI…VWNF), 438-458 (IAQI…LNLI), 464-484 (FPMY…VFVF), 495-515 (CILK…SGFA), 517-537 (IISY…SASF), and 550-570 (IGLI…NIML).

It belongs to the V-ATPase 116 kDa subunit family.

It is found in the cell membrane. Its function is as follows. Produces ATP from ADP in the presence of a proton gradient across the membrane. This Borreliella burgdorferi (strain ATCC 35210 / DSM 4680 / CIP 102532 / B31) (Borrelia burgdorferi) protein is V-type ATP synthase subunit I (atpI).